A 457-amino-acid polypeptide reads, in one-letter code: Fibrinogen C domain-containing protein 1-A (457 aa).

Residues 1–20 (MGSDRWKNIGGTPQMEDSAQ) are disordered. Residues 1-33 (MGSDRWKNIGGTPQMEDSAQEKTQRKGCGYILC) are Cytoplasmic-facing. The chain crosses the membrane as a helical; Signal-anchor for type II membrane protein span at residues 34–54 (TVLLSVAVLLAVTVTGAVLFM). Over 55-457 (NHYHAPSTEP…MKIRPQREEN (403 aa)) the chain is Extracellular. Positions 216–235 (ADLQRAPSRNSRPRGCANGS) are disordered. One can recognise a Fibrinogen C-terminal domain in the interval 231–454 (CANGSKPRDC…FTEMKIRPQR (224 aa)). A glycan (N-linked (GlcNAc...) asparagine) is linked at Asn-233. A disulfide bridge connects residues Cys-240 and Cys-269. Asn-336 is a glycosylation site (N-linked (GlcNAc...) asparagine). Residues Asp-389 and Asp-391 each contribute to the Ca(2+) site. Cys-397 and Cys-410 are joined by a disulfide.

Homotetramer; disulfide-linked.

The protein localises to the membrane. Functionally, acetyl group-binding receptor which shows a calcium-dependent binding to acetylated structures such as chitin, some N-acetylated carbohydrates, and amino acids. The chain is Fibrinogen C domain-containing protein 1-A (fibcd1-a) from Xenopus laevis (African clawed frog).